The following is a 674-amino-acid chain: NADH-quinone oxidoreductase subunit L (674 aa).

Transmembrane regions (helical) follow at residues 4–24 (MTLYLIIALVPLAGSLIAGLF), 36–56 (VTILGVAVSAVLSAYVLWGFL), 67–87 (VYTWLTMGGLDFSVGFLVDTM), 90–110 (MMMVVVTGVSLMVHIYTIGYM), 115–135 (VGYQRFFSYISLFTFSMLMLI), 140–160 (FIQLFFGWEAVGLVSYLLIGF), 180–200 (VGDFGFLLGIGLVLAYFGGSL), 219–239 (LFPGVEWSLITVTCLLLFVGA), 259–279 (PTPISALIHAATMVTAGLFMV), 293–313 (LSVIMVIGAITALFMGFLGVI), 348–368 (VMTHAFFKALLFLAAGSAIIG), 385–405 (MPITWLTMLIGNLSLIGTPFF), 425–445 (GSGFAYFAVLASVFVTAFYAF), 488–508 (VVTLPLILLAVPSVIIGYIAI), 549–569 (LHSPVLYLAIAGVLSAWLLYV), and 653–673 (YAAAMVFGVLVLLGMTFWGLF).

It belongs to the complex I subunit 5 family.

Its subcellular location is the cell membrane. The enzyme catalyses a quinone + NADH + 5 H(+)(in) = a quinol + NAD(+) + 4 H(+)(out). Functionally, NDH-1 shuttles electrons from NADH, via FMN and iron-sulfur (Fe-S) centers, to quinones in the respiratory chain. The immediate electron acceptor for the enzyme in this species is believed to be ubiquinone. Couples the redox reaction to proton translocation (for every two electrons transferred, four hydrogen ions are translocated across the cytoplasmic membrane), and thus conserves the redox energy in a proton gradient. This is NADH-quinone oxidoreductase subunit L (nuoL) from Neisseria meningitidis serogroup A / serotype 4A (strain DSM 15465 / Z2491).